The sequence spans 427 residues: UPF0229 protein YeaH (427 aa).

Basic and acidic residues predominate over residues 79–90 (NDHFIQNDRIER). A disordered region spans residues 79–110 (NDHFIQNDRIERPQGGGGGSGSGQGQASQDGE). The span at 92–102 (QGGGGGSGSGQ) shows a compositional bias: gly residues.

The protein belongs to the UPF0229 family.

This Salmonella paratyphi B (strain ATCC BAA-1250 / SPB7) protein is UPF0229 protein YeaH.